Reading from the N-terminus, the 128-residue chain is Ribonuclease pancreatic (128 aa).

The tract at residues 1 to 23 (AESSAMKFQRQHVDSEGSSSSNA) is disordered. Substrate is bound by residues Lys-7 and Arg-10. Catalysis depends on His-12, which acts as the Proton acceptor. 4 disulfides stabilise this stretch: Cys-26-Cys-84, Cys-40-Cys-95, Cys-58-Cys-110, and Cys-65-Cys-72. Residues 41–45 (KPVNT), Lys-66, and Arg-85 each bind substrate. His-119 serves as the catalytic Proton donor.

The protein belongs to the pancreatic ribonuclease family. In terms of assembly, monomer. Interacts with and forms tight 1:1 complexes with RNH1. Dimerization of two such complexes may occur. Interaction with RNH1 inhibits this protein. Pancreas.

The protein resides in the secreted. The enzyme catalyses an [RNA] containing cytidine + H2O = an [RNA]-3'-cytidine-3'-phosphate + a 5'-hydroxy-ribonucleotide-3'-[RNA].. It carries out the reaction an [RNA] containing uridine + H2O = an [RNA]-3'-uridine-3'-phosphate + a 5'-hydroxy-ribonucleotide-3'-[RNA].. Its function is as follows. Endonuclease that catalyzes the cleavage of RNA on the 3' side of pyrimidine nucleotides. Acts on single-stranded and double-stranded RNA. The polypeptide is Ribonuclease pancreatic (RNASE1) (Hydrochoerus hydrochaeris (Capybara)).